The following is a 743-amino-acid chain: Myb-related protein B (743 aa).

Residues 1–29 (MSRRSRGDDLEDLQYQDTDSDVPEPKENR) form a disordered region. Over residues 9–22 (DLEDLQYQDTDSDV) the composition is skewed to acidic residues. 3 HTH myb-type domains span residues 26-77 (KENR…LRVL), 78-133 (HPDL…NPEV), and 134-184 (KKSS…KRKV). 3 DNA-binding regions (H-T-H motif) span residues 54–77 (WKTIASNLNNRTEQQCQHRWLRVL), 106–129 (WTLIAKQLRGRMGKQCRERWHNHL), and 157–180 (WAEIAKLLPGRTDNAVKNHWNSTI). Disordered regions lie at residues 221-262 (VERS…SESA) and 381-406 (VTENGGSITTSVTEANSMTPKSTPVK).

As to quaternary structure, component of the DREAM complex.

The protein resides in the nucleus. This Xenopus laevis (African clawed frog) protein is Myb-related protein B (mybl2).